The chain runs to 110 residues: Red pigment-concentrating prohormone (110 aa).

The first 25 residues, 1–25 (MVRRTGVTLLVVALVVVALVSSVSA), serve as a signal peptide directing secretion. Position 26 is a pyrrolidone carboxylic acid (Q26). The residue at position 33 (W33) is a Tryptophan amide.

It belongs to the AKH/HRTH/RPCH family.

It is found in the secreted. In terms of biological role, this hormone adapts the animal to light backgrounds by stimulating concentration of the pigment of its red body-chromatophores. The chain is Red pigment-concentrating prohormone from Carcinus maenas (Common shore crab).